We begin with the raw amino-acid sequence, 790 residues long: Chorion peroxidase (790 aa).

The N-terminal stretch at 1–16 is a signal peptide; sequence MAKKVLLLSLYSAVLS. Positions 17–209 are excised as a propeptide; it reads TWFGFGYVQC…ARIPRAIRKR (193 aa). At Cys210 the chain carries N-acetylcysteine; in Chorion peroxidase light chain. An intrachain disulfide couples Cys216 to Cys229. Trp259 carries N-linked (Man) tryptophan glycosylation. The Proton acceptor role is filled by His305. An N-linked (GlcNAc...) asparagine glycan is attached at Asn327. Position 353 is a 3',4'-dihydroxyphenylalanine (Tyr353). Cysteines 433 and 440 form a disulfide. An N-linked (Man) tryptophan glycan is attached at Trp479. Heme b is bound at residue His551. Residue Trp680 is glycosylated (N-linked (Man) tryptophan). A disulfide bridge links Cys746 with Cys774. Trp785 carries N-linked (Man) tryptophan glycosylation.

This sequence belongs to the peroxidase family. XPO subfamily. Heterodimer. It depends on heme b as a cofactor. N-glycosylated on Trp by mannose and on Asn by N-acetylglucosamine. Post-translationally, there is a hexose glycosylation of an unidentified residue between 654 and 708; Trp-680 is conserved in closely related species and is probably mannosylated.

The protein localises to the secreted. It catalyses the reaction 2 a phenolic donor + H2O2 = 2 a phenolic radical donor + 2 H2O. Extremely resistant to denaturating agents, such as SDS and organic solvents. Functionally, involved in the formation of a rigid and insoluble egg chorion by catalyzing chorion protein cross-linking through dityrosine formation and phenol oxidase-catalyzed chorion melanization. The polypeptide is Chorion peroxidase (pxt) (Aedes aegypti (Yellowfever mosquito)).